We begin with the raw amino-acid sequence, 209 residues long: Uracil phosphoribosyltransferase (209 aa).

5-phospho-alpha-D-ribose 1-diphosphate is bound by residues Arg79, Arg104, and 131 to 139; that span reads DPMLATGGS. Residues Ile194 and 199-201 each bind uracil; that span reads GDA. Asp200 is a 5-phospho-alpha-D-ribose 1-diphosphate binding site.

It belongs to the UPRTase family. Requires Mg(2+) as cofactor.

It carries out the reaction UMP + diphosphate = 5-phospho-alpha-D-ribose 1-diphosphate + uracil. It functions in the pathway pyrimidine metabolism; UMP biosynthesis via salvage pathway; UMP from uracil: step 1/1. With respect to regulation, allosterically activated by GTP. Its function is as follows. Catalyzes the conversion of uracil and 5-phospho-alpha-D-ribose 1-diphosphate (PRPP) to UMP and diphosphate. This chain is Uracil phosphoribosyltransferase, found in Ligilactobacillus salivarius (strain UCC118) (Lactobacillus salivarius).